Consider the following 253-residue polypeptide: U1 small nuclear ribonucleoprotein A (253 aa).

In terms of domain architecture, RRM 1 spans 23–102; that stretch reads VTIYINNLNE…KPMRIQYAKT (80 aa). The interval 111–140 is disordered; that stretch reads DGTFVPRERRKRNDEKPEKKQKREQHHDVS. Residues 179 to 253 form the RRM 2 domain; the sequence is NILFVQNLPH…NQMLISYAKK (75 aa).

This sequence belongs to the RRM U1 A/B'' family. As to quaternary structure, component of the spliceosome where it is associated with snRNP U1.

The protein resides in the nucleus. It is found in the nucleolus. In terms of biological role, involved in nuclear pre-mRNA splicing. The sequence is that of U1 small nuclear ribonucleoprotein A from Oryza sativa subsp. indica (Rice).